The following is a 552-amino-acid chain: Probable beta-glucosidase btgE (552 aa).

A signal peptide spans 1 to 18 (MRGAILATAAALAGTAMA). A disordered region spans residues 250-291 (EPTSAPAAPSTTAVPATTTAAVPSTSSAAPSSSSTAPASTGA). Residues 251 to 289 (PTSAPAAPSTTAVPATTTAAVPSTSSAAPSSSSTAPAST) show a composition bias toward low complexity. Glu392 serves as the catalytic Proton donor. The active-site Nucleophile is the Glu488.

The protein belongs to the glycosyl hydrolase 17 family.

It is found in the secreted. Its subcellular location is the cell wall. The enzyme catalyses Hydrolysis of terminal, non-reducing beta-D-glucosyl residues with release of beta-D-glucose.. Its pathway is glycan metabolism; cellulose degradation. Its function is as follows. Beta-glucosidases are one of a number of cellulolytic enzymes involved in the degradation of cellulosic biomass. Catalyzes the last step releasing glucose from the inhibitory cellobiose. In Neosartorya fischeri (strain ATCC 1020 / DSM 3700 / CBS 544.65 / FGSC A1164 / JCM 1740 / NRRL 181 / WB 181) (Aspergillus fischerianus), this protein is Probable beta-glucosidase btgE (btgE).